The following is a 238-amino-acid chain: MEKRDELYAGKAKSVYTTDDEDMLIMLFRDDTSAFDGKKKEALARKGAVNNQFNAAIMEKLKAAGIPCHFEKTLSATESLVKKLDMIPVECVVRNIAAGSICRRLGVEEGLELTPPTFEFFLKDDDLGDPMVNDFHIRSFGWASDDQVAQMKTLTFAVNDVLKQLFLDGGMLLVDYKLEFGMFKGEVLLGDEFSPDGCRLWDKDSREKLDKDRFRQGLGGVVEAYEEVGKRLGMTFEY.

Belongs to the SAICAR synthetase family.

The catalysed reaction is 5-amino-1-(5-phospho-D-ribosyl)imidazole-4-carboxylate + L-aspartate + ATP = (2S)-2-[5-amino-1-(5-phospho-beta-D-ribosyl)imidazole-4-carboxamido]succinate + ADP + phosphate + 2 H(+). The protein operates within purine metabolism; IMP biosynthesis via de novo pathway; 5-amino-1-(5-phospho-D-ribosyl)imidazole-4-carboxamide from 5-amino-1-(5-phospho-D-ribosyl)imidazole-4-carboxylate: step 1/2. The polypeptide is Phosphoribosylaminoimidazole-succinocarboxamide synthase (Alcanivorax borkumensis (strain ATCC 700651 / DSM 11573 / NCIMB 13689 / SK2)).